A 528-amino-acid polypeptide reads, in one-letter code: Abrin-d (528 aa).

The residue at position 1 (Q1) is a Pyrrolidone carboxylic acid. E164 is an active-site residue. The N-linked (GlcNAc...) asparagine glycan is linked to N200. Cystine bridges form between C247–C269, C286–C305, and C329–C346. Residues 273–400 (YEPTVRIGGR…YLMRQGWRTG (128 aa)) form the Ricin B-type lectin 1 domain. A 1-alpha repeat occupies 283–325 (DGMCVDVYDDGYHNGNRIIAWKCKDRLEENQLWTLKSDLTIRS). Residues 326–366 (NGKCLTTEGYAPGNYVMIYDCTSAVAEATYWEIWDNGTIIN) form a 1-beta repeat. N-linked (GlcNAc...) asparagine glycans are attached at residues N361 and N401. The 1-gamma repeat unit spans residues 369–401 (SALVLSAESSSMGGTLTVQTNEYLMRQGWRTGN). The region spanning 403-527 (TSPFVTSISG…GKPNQIWLTL (125 aa)) is the Ricin B-type lectin 2 domain. The 2-alpha repeat unit spans residues 414 to 449 (SDLCMQAQGSNVWLADCDNNKKEQQWALYTDGSIRS). Cystine bridges form between C417–C430 and C456–C473. Residues 453 to 492 (TNNCLTSKDHKQGSPIVLMACSNGWASQRWLFKNDGSIYS) form a 2-beta repeat. A 2-gamma repeat occupies 495-528 (DDMVMDVKGSDPSLKQIILWPYTGKPNQIWLTLF).

The protein in the N-terminal section; belongs to the ribosome-inactivating protein family. Type 2 RIP subfamily. Disulfide-linked dimer of A and B chains.

The catalysed reaction is Endohydrolysis of the N-glycosidic bond at one specific adenosine on the 28S rRNA.. In terms of biological role, the A chain is responsible for inhibiting protein synthesis through the catalytic inactivation of 60S ribosomal subunits by removing adenine from position 4,324 of 28S rRNA. Functionally, the B chain is a galactose-specific lectin that facilitates the binding of abrin to the cell membrane that precedes endocytosis. In Abrus precatorius (Indian licorice), this protein is Abrin-d.